A 92-amino-acid polypeptide reads, in one-letter code: UPF0250 protein VV0902 (92 aa).

It belongs to the UPF0250 family.

The sequence is that of UPF0250 protein VV0902 from Vibrio vulnificus (strain YJ016).